Reading from the N-terminus, the 543-residue chain is Chaperonin GroEL 2 (543 aa).

Residues 29 to 32, 86 to 90, glycine 413, and aspartate 495 contribute to the ATP site; these read TLGP and DGTTT. A disordered region spans residues 524 to 543; it reads KPEPKENAPTGAGMGGDFDY.

Belongs to the chaperonin (HSP60) family. As to quaternary structure, forms a cylinder of 14 subunits composed of two heptameric rings stacked back-to-back. Interacts with the co-chaperonin GroES.

The protein localises to the cytoplasm. The enzyme catalyses ATP + H2O + a folded polypeptide = ADP + phosphate + an unfolded polypeptide.. Its function is as follows. Together with its co-chaperonin GroES, plays an essential role in assisting protein folding. The GroEL-GroES system forms a nano-cage that allows encapsulation of the non-native substrate proteins and provides a physical environment optimized to promote and accelerate protein folding. In Acaryochloris marina (strain MBIC 11017), this protein is Chaperonin GroEL 2.